A 108-amino-acid chain; its full sequence is Ribonuclease P protein component 4 (108 aa).

Positions 67, 70, 93, and 96 each coordinate Zn(2+).

This sequence belongs to the eukaryotic/archaeal RNase P protein component 4 family. Consists of a catalytic RNA component and at least 4-5 protein subunits. Requires Zn(2+) as cofactor.

It is found in the cytoplasm. The enzyme catalyses Endonucleolytic cleavage of RNA, removing 5'-extranucleotides from tRNA precursor.. Functionally, part of ribonuclease P, a protein complex that generates mature tRNA molecules by cleaving their 5'-ends. This Methanococcoides burtonii (strain DSM 6242 / NBRC 107633 / OCM 468 / ACE-M) protein is Ribonuclease P protein component 4.